The following is a 957-amino-acid chain: Collagen alpha-1(XXI) chain (957 aa).

The N-terminal stretch at 1–16 (MPGIIYILCSILLIES) is a signal peptide. One can recognise a VWFA domain in the interval 37 to 211 (DLVFILDGSW…RIREIMKQKL (175 aa)). The 183-residue stretch at 230–412 (GFDILLGLGI…LQKLRIYCDP (183 aa)) folds into the Laminin G-like domain. 2 disordered regions span residues 441-788 (PAPC…GKEQ) and 820-935 (CKTQ…DAGI). 8 Collagen-like domains span residues 448-501 (PGEK…PRGF), 502-543 (AGLK…DKGD), 544-591 (IGID…EEGK), 592-642 (PGPP…ISGP), 643-684 (EGIS…IPGQ), 685-741 (QGYT…EIGE), 742-786 (HGHR…QQGK), and 825-882 (GSPG…GNKG). Residues 483-498 (TSGSPGIPGSPGVQGP) are compositionally biased toward low complexity. Residues 535-556 (MGPKGDKGDIGIDGKKGTKGDK) show a composition bias toward basic and acidic residues. Low complexity-rich tracts occupy residues 597–616 (MEGL…DGAN) and 633–649 (PTGT…SGPQ). A compositionally biased stretch (basic and acidic residues) spans 733–744 (KGEKGEIGEHGH). A compositionally biased stretch (low complexity) spans 775–786 (QGLPGPKGQQGK).

The protein belongs to the fibril-associated collagens with interrupted helices (FACIT) family.

Its subcellular location is the secreted. The protein resides in the extracellular space. It is found in the extracellular matrix. The protein localises to the cytoplasm. The sequence is that of Collagen alpha-1(XXI) chain (col21a1) from Xenopus laevis (African clawed frog).